Consider the following 188-residue polypeptide: Protease-associated domain-containing protein 1 (188 aa).

An N-terminal signal peptide occupies residues 1 to 21; sequence MSRGAAGWCCLVLWLPTCVAA. Residues 83–163 enclose the PA domain; sequence IQDQIALVER…RSLEQHGLPW (81 aa). N-linked (GlcNAc...) asparagine glycosylation is found at asparagine 121 and asparagine 171.

In terms of processing, N-glycosylated; required for efficient secretion. As to expression, expressed in metabolically active tissues such as liver, muscle, adipose, and heart and different brain regions like cortex and hypothalamus, expression is acutely regulated by the nutritional state.

It is found in the secreted. In terms of biological role, plays a role in the modulation of physical activity and adiposity. This chain is Protease-associated domain-containing protein 1, found in Mus musculus (Mouse).